We begin with the raw amino-acid sequence, 202 residues long: Orotate phosphoribosyltransferase (202 aa).

Residue 113–121 participates in 5-phospho-alpha-D-ribose 1-diphosphate binding; that stretch reads EDIITTGGS. Thr-117 and Arg-145 together coordinate orotate.

It belongs to the purine/pyrimidine phosphoribosyltransferase family. PyrE subfamily. In terms of assembly, homodimer. The cofactor is Mg(2+).

It carries out the reaction orotidine 5'-phosphate + diphosphate = orotate + 5-phospho-alpha-D-ribose 1-diphosphate. The protein operates within pyrimidine metabolism; UMP biosynthesis via de novo pathway; UMP from orotate: step 1/2. Its function is as follows. Catalyzes the transfer of a ribosyl phosphate group from 5-phosphoribose 1-diphosphate to orotate, leading to the formation of orotidine monophosphate (OMP). The chain is Orotate phosphoribosyltransferase from Sulfurimonas denitrificans (strain ATCC 33889 / DSM 1251) (Thiomicrospira denitrificans (strain ATCC 33889 / DSM 1251)).